A 157-amino-acid chain; its full sequence is 2-C-methyl-D-erythritol 2,4-cyclodiphosphate synthase (157 aa).

Asp8 and His10 together coordinate a divalent metal cation. Residues 8–10 (DVH) and 34–35 (HS) each bind 4-CDP-2-C-methyl-D-erythritol 2-phosphate. His42 is an a divalent metal cation binding site. Residues 56–58 (DIG), 61–65 (FPDTD), 100–106 (AQAPKMA), 132–135 (TTTE), Phe139, and Arg142 contribute to the 4-CDP-2-C-methyl-D-erythritol 2-phosphate site.

Belongs to the IspF family. As to quaternary structure, homotrimer. It depends on a divalent metal cation as a cofactor.

The catalysed reaction is 4-CDP-2-C-methyl-D-erythritol 2-phosphate = 2-C-methyl-D-erythritol 2,4-cyclic diphosphate + CMP. It participates in isoprenoid biosynthesis; isopentenyl diphosphate biosynthesis via DXP pathway; isopentenyl diphosphate from 1-deoxy-D-xylulose 5-phosphate: step 4/6. Its function is as follows. Involved in the biosynthesis of isopentenyl diphosphate (IPP) and dimethylallyl diphosphate (DMAPP), two major building blocks of isoprenoid compounds. Catalyzes the conversion of 4-diphosphocytidyl-2-C-methyl-D-erythritol 2-phosphate (CDP-ME2P) to 2-C-methyl-D-erythritol 2,4-cyclodiphosphate (ME-CPP) with a corresponding release of cytidine 5-monophosphate (CMP). This chain is 2-C-methyl-D-erythritol 2,4-cyclodiphosphate synthase, found in Pseudomonas savastanoi pv. phaseolicola (strain 1448A / Race 6) (Pseudomonas syringae pv. phaseolicola (strain 1448A / Race 6)).